A 220-amino-acid chain; its full sequence is Iron-sulfur cluster repair protein YtfE (220 aa).

It belongs to the RIC family. YtfE subfamily. As to quaternary structure, homodimer.

The protein resides in the cytoplasm. Functionally, di-iron-containing protein involved in the repair of iron-sulfur clusters damaged by oxidative and nitrosative stress conditions. This chain is Iron-sulfur cluster repair protein YtfE, found in Shigella boydii serotype 18 (strain CDC 3083-94 / BS512).